Reading from the N-terminus, the 927-residue chain is Probable RNA-dependent RNA polymerase 4 (927 aa).

Residues 98–135 (GESPVQFPRTPGKKSCRASQAEVSLDREDPSPKFLRGD) are disordered. A compositionally biased stretch (basic and acidic residues) spans 121–135 (SLDREDPSPKFLRGD).

This sequence belongs to the RdRP family.

The enzyme catalyses RNA(n) + a ribonucleoside 5'-triphosphate = RNA(n+1) + diphosphate. Its function is as follows. Probably involved in the RNA silencing pathway and required for the generation of small interfering RNAs (siRNAs). This is Probable RNA-dependent RNA polymerase 4 (RDR4) from Arabidopsis thaliana (Mouse-ear cress).